The primary structure comprises 290 residues: Protein translocase subunit SecF (290 aa).

The next 6 helical transmembrane spans lie at 15–35 (VFMI…FTKG), 131–151 (KAIL…TVRF), 156–176 (AISA…IFAI), 184–204 (SFIA…IIVF), 234–256 (TLYT…GVVL), and 260–282 (ILAI…SAIL).

The protein belongs to the SecD/SecF family. SecF subfamily. Forms a complex with SecD. Part of the essential Sec protein translocation apparatus which comprises SecA, SecYEG and auxiliary proteins SecDF. Other proteins may also be involved.

The protein resides in the cell inner membrane. Its function is as follows. Part of the Sec protein translocase complex. Interacts with the SecYEG preprotein conducting channel. SecDF uses the proton motive force (PMF) to complete protein translocation after the ATP-dependent function of SecA. This Dictyoglomus turgidum (strain DSM 6724 / Z-1310) protein is Protein translocase subunit SecF.